A 403-amino-acid polypeptide reads, in one-letter code: Argininosuccinate synthase (403 aa).

ATP contacts are provided by residues 13-21 (AYSGGLDTS) and A40. L-citrulline contacts are provided by Y91 and S96. ATP is bound at residue G121. Positions 123, 127, and 128 each coordinate L-aspartate. N127 contributes to the L-citrulline binding site. L-citrulline contacts are provided by R131, S180, S189, E265, and Y277.

This sequence belongs to the argininosuccinate synthase family. Type 1 subfamily. As to quaternary structure, homotetramer.

It is found in the cytoplasm. It carries out the reaction L-citrulline + L-aspartate + ATP = 2-(N(omega)-L-arginino)succinate + AMP + diphosphate + H(+). It functions in the pathway amino-acid biosynthesis; L-arginine biosynthesis; L-arginine from L-ornithine and carbamoyl phosphate: step 2/3. In Leptospira interrogans serogroup Icterohaemorrhagiae serovar Lai (strain 56601), this protein is Argininosuccinate synthase.